A 325-amino-acid chain; its full sequence is Probable cell division protein WhiA (325 aa).

Residues 280-313 (SLKELGSMLKNPLGKSGVNHRLRKIDKIAEELRK) constitute a DNA-binding region (H-T-H motif).

The protein belongs to the WhiA family.

Its function is as follows. Involved in cell division and chromosome segregation. The chain is Probable cell division protein WhiA from Caldicellulosiruptor saccharolyticus (strain ATCC 43494 / DSM 8903 / Tp8T 6331).